Here is a 312-residue protein sequence, read N- to C-terminus: GDSL esterase/lipase At2g38180 (312 aa).

A signal peptide spans 1–22; the sequence is MVGPVRPQIVLFGSSIVQYSFT. Residue asparagine 79 is glycosylated (N-linked (GlcNAc...) asparagine). The tract at residues 285–312 is disordered; sequence EPPHPVSLCDHELTQNEQLEPPQPTARL.

The protein belongs to the 'GDSL' lipolytic enzyme family.

It localises to the secreted. The polypeptide is GDSL esterase/lipase At2g38180 (Arabidopsis thaliana (Mouse-ear cress)).